The chain runs to 290 residues: tRNA dimethylallyltransferase (290 aa).

9-16 is an ATP binding site; that stretch reads GPTASGKT. 11–16 is a binding site for substrate; sequence TASGKT. Residues 34-37 form an interaction with substrate tRNA region; it reads DSTQ.

Belongs to the IPP transferase family. As to quaternary structure, monomer. It depends on Mg(2+) as a cofactor.

The catalysed reaction is adenosine(37) in tRNA + dimethylallyl diphosphate = N(6)-dimethylallyladenosine(37) in tRNA + diphosphate. Its function is as follows. Catalyzes the transfer of a dimethylallyl group onto the adenine at position 37 in tRNAs that read codons beginning with uridine, leading to the formation of N6-(dimethylallyl)adenosine (i(6)A). The polypeptide is tRNA dimethylallyltransferase (Phytoplasma australiense).